A 208-amino-acid chain; its full sequence is Large ribosomal subunit protein uL4 (208 aa).

The tract at residues 50 to 83 (VKTRAEVSGGGRKPWKQKGTGRARQGSIRAPQWK) is disordered.

The protein belongs to the universal ribosomal protein uL4 family. In terms of assembly, part of the 50S ribosomal subunit.

In terms of biological role, one of the primary rRNA binding proteins, this protein initially binds near the 5'-end of the 23S rRNA. It is important during the early stages of 50S assembly. It makes multiple contacts with different domains of the 23S rRNA in the assembled 50S subunit and ribosome. Its function is as follows. Forms part of the polypeptide exit tunnel. This chain is Large ribosomal subunit protein uL4, found in Mycoplasma mycoides subsp. mycoides SC (strain CCUG 32753 / NCTC 10114 / PG1).